Here is a 1395-residue protein sequence, read N- to C-terminus: MYPICTVVVDGLPSESSSSSYPGPVSVSEMSLLHALGPVQTWLGQELEKCGIDAMIYTRYVLSLLLHDSYDYDLQEQENDIFLGWEKGAYKKWGKSKKKCSDLTLEEMKKQAAVQCLRSASDESSGIETLVEELCSRLKDLQSKQEEKIHKKLEGSPSPEAELSPPAKDQVEMYYEAFPPLSEKPVCLQEIMTVWNKSKVCSYSSSSSSSTAPPASTDTSSPKDCNSESEVTKERSSEVPTTVHEKTQSKSKNEKENKFSNGTIEEKPALYKKQIRHKPEGKIRPRSWSSGSSEAGSSSSGNQGELKASMKYVKVRHKAREIRNKKGRNGQSRLSLKHGEKAERNIHTGSSSSSSSGSVKQLCKRGKRPLKEIGRKDPGSTEGKDLYMENRKDTEYKEEPLWYTEPIAEYFVPLSRKSKLETTYRNRQDTSDLTSEAVEELSESVHGLCISNNNLHKTYLAAGTFIDGHFVEMPAVINEDIDLTGTSLCSLPEDNKYLDDIHLSELTHFYEVDIDQSMLDPGASETMQGESRILNMIRQKSKENTDFEAECCIVLDGMELQGERAIWTDSTSSVGAEGLFLQDLGNLAQFWECCSSSSGDADGESFGGDSPVRLSPILDSTVLNSHLLAGNQELFSDINEGSGINSCFSVFEVQCSNSVLPFSFETLNLGNENTDSSANMLGKTQSRLLIWTKNSAFEENEHCSNLSTRTCSPWSHSEETRSDNETLNIQFEESTQFNAEDINYVVPRVSSNYVDEELLDFLQDETCQQNSRTLGEIPTLVFKKTSKLESVCGIQLEQKTENKNFETTQVCNESPHGDGYSSGVIKDIWTKMADTNSVATVEIERTDAELFSADVNNYCCCLDAEAELETLQEPDKAVRRSEYHLWEGQKESLEKRAFASSELSNVDGGDYTTPSKPWDVAQDKENTFILGGVYGELKTFNSDGEWAVVPPSHTKGSLLQCAASDVVTIAGTDVFMTPGNSFAPGHRQLWKPFVSFEQNDQPKSGENGLNKGFSFIFHEDLLGACGNFQVEDPGLEYSFSSFDLSNPFSQVLHVECSFEPEGIASFSPSFKPKSILCSDSDSEVFHPRICGVDRTQYRAIRISPRTHFRPISASELSPGGGSESEFESEKDEANIPIPSQVDIFEDPQADLKPLEEDAEKEGHYYGKSELESGKFLPRLKKSGMEKSAQTSLDSQEESTGILSVGKQNQCLECSMNESLEIDLESSEANCKIMAQCEEEINNFCGCKAGCQFPAYEDNPVSSGQLEEFPVLNTDIQGMNRSQEKQTWWEKALYSPLFPASECEECYTNAKGESGLEEYPDAKETPSNEERLLDFNRVSSVYEARCTGERDSGAKSDGFRGKMCSSASSTSEETGSEGGGEWVGPSEEELFSRTHL.

89–96 serves as a coordination point for ATP; sequence AYKKWGKS. Disordered regions lie at residues 146-166 and 205-391; these read EEKI…LSPP and SSSS…MENR. 2 stretches are compositionally biased toward low complexity: residues 155–166 and 205–222; these read GSPSPEAELSPP and SSSS…TSSP. Residues 230-269 show a composition bias toward basic and acidic residues; the sequence is EVTKERSSEVPTTVHEKTQSKSKNEKENKFSNGTIEEKPA. Low complexity predominate over residues 287–301; that stretch reads SWSSGSSEAGSSSSG. Residues 313 to 328 are compositionally biased toward basic residues; it reads VKVRHKAREIRNKKGR. A compositionally biased stretch (basic and acidic residues) spans 337–346; sequence KHGEKAERNI. Low complexity predominate over residues 349–358; that stretch reads GSSSSSSSGS. The segment covering 369-391 has biased composition (basic and acidic residues); it reads PLKEIGRKDPGSTEGKDLYMENR. A phosphoserine mark is found at serine 814 and serine 1080. The tract at residues 1110–1132 is disordered; it reads PISASELSPGGGSESEFESEKDE. Residues serine 1194 and serine 1338 each carry the phosphoserine modification. A compositionally biased stretch (basic and acidic residues) spans 1346 to 1359; the sequence is TGERDSGAKSDGFR. The disordered stretch occupies residues 1346–1395; that stretch reads TGERDSGAKSDGFRGKMCSSASSTSEETGSEGGGEWVGPSEEELFSRTHL.

This is an uncharacterized protein from Homo sapiens (Human).